Here is a 623-residue protein sequence, read N- to C-terminus: Chaperone protein HtpG (623 aa).

An a; substrate-binding region spans residues 1–336; it reads MSMKGQETRG…SNDLPLNVSR (336 aa). A b region spans residues 337–551; sequence EILQDSRVTQ…ADEMSTQMAK (215 aa). The tract at residues 552–623 is c; that stretch reads LFAAAGQEAP…IRRMNKLLSA (72 aa).

It belongs to the heat shock protein 90 family. Homodimer.

It is found in the cytoplasm. Its function is as follows. Molecular chaperone. Has ATPase activity. The chain is Chaperone protein HtpG from Serratia proteamaculans (strain 568).